The chain runs to 761 residues: Ribonucleoside-diphosphate reductase subunit alpha (761 aa).

One can recognise an ATP-cone domain in the interval 5 to 95 (LFVTKRNGKI…IFHLRKKAFG (91 aa)). ATP is bound by residues K9, 15 to 21 (ELINLDK), T55, and K91. T209 contributes to the GDP binding site. A disulfide bridge links C225 with C462. Residues 232 to 234 (DNL), R262, and R269 contribute to the dTTP site. Position 437 (N437) interacts with GDP. The Proton acceptor role is filled by N437. The active-site Cysteine radical intermediate is C439. Residues E441 and 623–625 (ETS) each bind GDP. Residue E441 is the Proton acceptor of the active site.

Belongs to the ribonucleoside diphosphate reductase large chain family. As to quaternary structure, tetramer of two alpha and two beta subunits.

The catalysed reaction is a 2'-deoxyribonucleoside 5'-diphosphate + [thioredoxin]-disulfide + H2O = a ribonucleoside 5'-diphosphate + [thioredoxin]-dithiol. With respect to regulation, under complex allosteric control mediated by deoxynucleoside triphosphates and ATP binding to separate specificity and activation sites on the alpha subunit. The type of nucleotide bound at the specificity site determines substrate preference. It seems probable that ATP makes the enzyme reduce CDP and UDP, dGTP favors ADP reduction and dTTP favors GDP reduction. Stimulated by ATP and inhibited by dATP binding to the activity site. Its function is as follows. Provides the precursors necessary for DNA synthesis. Catalyzes the biosynthesis of deoxyribonucleotides from the corresponding ribonucleotides. The chain is Ribonucleoside-diphosphate reductase subunit alpha (nrdA) from Buchnera aphidicola subsp. Baizongia pistaciae (strain Bp).